The chain runs to 159 residues: MNMKKFVKKPLAIAVLMLASGGMVNMVHAEPTVINSKDISATKTVKEGGSFSVEFKATENEIVSGKLDADTPAFHLVMSDSGEHKGWNVRPTGASEGGQMVSADGTRVDLHTNELSWDNDHWWIDDGSERVEATFFLAAGDEVKAGEYQFTGRVEEYVE.

Residues 1 to 29 form the signal peptide; it reads MNMKKFVKKPLAIAVLMLASGGMVNMVHA.

In terms of assembly, forms a homomer composed of subunits assembled in a large structure resistant to proteases and chaotropic agents.

It localises to the fimbrium. Major pilus subunit. Expressed only in pathogenic serotypes, it is part of myf, a probable virulence factor. The sequence is that of Fimbrial protein MyfA (myfA) from Yersinia enterocolitica.